Consider the following 336-residue polypeptide: Holliday junction branch migration complex subunit RuvB (336 aa).

Positions alanine 4 to tyrosine 184 are large ATPase domain (RuvB-L). ATP is bound by residues isoleucine 23, arginine 24, glycine 65, lysine 68, threonine 69, threonine 70, glutamate 131–tyrosine 133, arginine 174, tyrosine 184, and arginine 221. Threonine 69 contacts Mg(2+). The tract at residues asparagine 185–aspartate 255 is small ATPAse domain (RuvB-S). Residues asparagine 258–arginine 336 form a head domain (RuvB-H) region. DNA is bound by residues arginine 313 and arginine 318.

This sequence belongs to the RuvB family. Homohexamer. Forms an RuvA(8)-RuvB(12)-Holliday junction (HJ) complex. HJ DNA is sandwiched between 2 RuvA tetramers; dsDNA enters through RuvA and exits via RuvB. An RuvB hexamer assembles on each DNA strand where it exits the tetramer. Each RuvB hexamer is contacted by two RuvA subunits (via domain III) on 2 adjacent RuvB subunits; this complex drives branch migration. In the full resolvosome a probable DNA-RuvA(4)-RuvB(12)-RuvC(2) complex forms which resolves the HJ.

It localises to the cytoplasm. The enzyme catalyses ATP + H2O = ADP + phosphate + H(+). The RuvA-RuvB-RuvC complex processes Holliday junction (HJ) DNA during genetic recombination and DNA repair, while the RuvA-RuvB complex plays an important role in the rescue of blocked DNA replication forks via replication fork reversal (RFR). RuvA specifically binds to HJ cruciform DNA, conferring on it an open structure. The RuvB hexamer acts as an ATP-dependent pump, pulling dsDNA into and through the RuvAB complex. RuvB forms 2 homohexamers on either side of HJ DNA bound by 1 or 2 RuvA tetramers; 4 subunits per hexamer contact DNA at a time. Coordinated motions by a converter formed by DNA-disengaged RuvB subunits stimulates ATP hydrolysis and nucleotide exchange. Immobilization of the converter enables RuvB to convert the ATP-contained energy into a lever motion, pulling 2 nucleotides of DNA out of the RuvA tetramer per ATP hydrolyzed, thus driving DNA branch migration. The RuvB motors rotate together with the DNA substrate, which together with the progressing nucleotide cycle form the mechanistic basis for DNA recombination by continuous HJ branch migration. Branch migration allows RuvC to scan DNA until it finds its consensus sequence, where it cleaves and resolves cruciform DNA. The chain is Holliday junction branch migration complex subunit RuvB from Aeromonas salmonicida (strain A449).